The following is a 117-amino-acid chain: Large ribosomal subunit protein bL20 (117 aa).

It belongs to the bacterial ribosomal protein bL20 family.

In terms of biological role, binds directly to 23S ribosomal RNA and is necessary for the in vitro assembly process of the 50S ribosomal subunit. It is not involved in the protein synthesizing functions of that subunit. This is Large ribosomal subunit protein bL20 from Symbiobacterium thermophilum (strain DSM 24528 / JCM 14929 / IAM 14863 / T).